The chain runs to 138 residues: MDNLNELVKECGVELYDTEIANENGRAIYRIYITKNGGVSLDDCEKVSRLLSPIFDVEPPISGDYNLEVSSPGLERKLSEARHFKASLGELVKAQTAEAKFAGRLVKADDESIALENDEGVFEIKIGDIKKAKTYLEW.

Belongs to the RimP family.

Its subcellular location is the cytoplasm. In terms of biological role, required for maturation of 30S ribosomal subunits. The chain is Ribosome maturation factor RimP from Campylobacter curvus (strain 525.92).